The following is an 89-amino-acid chain: UPF0297 protein OB2008 (89 aa).

It belongs to the UPF0297 family.

This is UPF0297 protein OB2008 from Oceanobacillus iheyensis (strain DSM 14371 / CIP 107618 / JCM 11309 / KCTC 3954 / HTE831).